The primary structure comprises 55 residues: ATP synthase protein 8 (55 aa).

Residues Trp-8–Leu-28 form a helical membrane-spanning segment. The tract at residues Asn-34–Leu-55 is disordered. Positions Ser-39–Leu-55 are enriched in low complexity.

Belongs to the ATPase protein 8 family. F-type ATPases have 2 components, CF(1) - the catalytic core - and CF(0) - the membrane proton channel.

Its subcellular location is the mitochondrion membrane. Functionally, mitochondrial membrane ATP synthase (F(1)F(0) ATP synthase or Complex V) produces ATP from ADP in the presence of a proton gradient across the membrane which is generated by electron transport complexes of the respiratory chain. F-type ATPases consist of two structural domains, F(1) - containing the extramembraneous catalytic core and F(0) - containing the membrane proton channel, linked together by a central stalk and a peripheral stalk. During catalysis, ATP synthesis in the catalytic domain of F(1) is coupled via a rotary mechanism of the central stalk subunits to proton translocation. Part of the complex F(0) domain. Minor subunit located with subunit a in the membrane. This Strongylocentrotus purpuratus (Purple sea urchin) protein is ATP synthase protein 8 (MT-ATP8).